Reading from the N-terminus, the 82-residue chain is Zinc finger CCCH domain-containing protein 13 (82 aa).

2 C3H1-type zinc fingers span residues 9–37 and 55–82; these read RPGE…HPKN and RPGQ…DHFT.

The chain is Zinc finger CCCH domain-containing protein 13 from Arabidopsis thaliana (Mouse-ear cress).